The primary structure comprises 385 residues: Galactokinase (385 aa).

Position 34 to 37 (34 to 37) interacts with substrate; that stretch reads EHTD. 124-130 contacts ATP; that stretch reads SSGLSSS. Ser130 and Glu162 together coordinate Mg(2+). Asp174 serves as the catalytic Proton acceptor. Tyr223 serves as a coordination point for substrate.

The protein belongs to the GHMP kinase family. GalK subfamily.

The protein localises to the cytoplasm. The catalysed reaction is alpha-D-galactose + ATP = alpha-D-galactose 1-phosphate + ADP + H(+). Its pathway is carbohydrate metabolism; galactose metabolism. Functionally, catalyzes the transfer of the gamma-phosphate of ATP to D-galactose to form alpha-D-galactose-1-phosphate (Gal-1-P). The polypeptide is Galactokinase (Mannheimia succiniciproducens (strain KCTC 0769BP / MBEL55E)).